A 327-amino-acid chain; its full sequence is MASASPEQNQNHCSAVNNSNMLMQGNLPTLTLSGKIRVTVTFFLFLLSTIFNASFLLKLQKWTQKKEKGKKLSRMKVLLKHLTLANLLETLIVMPLDGMWNITVQWYAGEFLCKVLSYLKLFSMYAPAFMMVVISLDRSLAITRPLAMKNNGKLGQSMIGLAWLLSGIFAGPQLYIFRMIHLADSSGQTEGFPQCVTHCSFPQWWHQAFYNFFTFSCLFIIPLFITLICNAKIIFTLTRVLHQDPHELQLNQSKNNIPRARLRTLKMTVAFATSFTVCWTPYYVLGIWYWFDPEMLNRVSDPVNHFFFLFALLNPCFDPLIYGYFSL.

Topologically, residues 1–37 are extracellular; that stretch reads MASASPEQNQNHCSAVNNSNMLMQGNLPTLTLSGKIR. The N-linked (GlcNAc...) asparagine glycan is linked to asparagine 17. A helical transmembrane segment spans residues 38–57; the sequence is VTVTFFLFLLSTIFNASFLL. Topologically, residues 58–76 are cytoplasmic; it reads KLQKWTQKKEKGKKLSRMK. A helical membrane pass occupies residues 77 to 96; it reads VLLKHLTLANLLETLIVMPL. Residues 97–114 are Extracellular-facing; it reads DGMWNITVQWYAGEFLCK. N-linked (GlcNAc...) asparagine glycosylation is present at asparagine 101. The cysteines at positions 113 and 195 are disulfide-linked. The chain crosses the membrane as a helical span at residues 115–136; it reads VLSYLKLFSMYAPAFMMVVISL. The Cytoplasmic segment spans residues 137–163; the sequence is DRSLAITRPLAMKNNGKLGQSMIGLAW. Residues 164–183 traverse the membrane as a helical segment; sequence LLSGIFAGPQLYIFRMIHLA. Residues 184–211 are Extracellular-facing; that stretch reads DSSGQTEGFPQCVTHCSFPQWWHQAFYN. The helical transmembrane segment at 212 to 231 threads the bilayer; it reads FFTFSCLFIIPLFITLICNA. At 232–280 the chain is on the cytoplasmic side; it reads KIIFTLTRVLHQDPHELQLNQSKNNIPRARLRTLKMTVAFATSFTVCWT. Residues 281–299 form a helical membrane-spanning segment; sequence PYYVLGIWYWFDPEMLNRV. Residues 300–305 are Extracellular-facing; that stretch reads SDPVNH. A helical membrane pass occupies residues 306–325; it reads FFFLFALLNPCFDPLIYGYF. Over 326-327 the chain is Cytoplasmic; it reads SL.

It belongs to the G-protein coupled receptor 1 family.

It is found in the cell membrane. Functionally, receptor for gonadotropin releasing hormone (GnRH) that mediates the action of GnRH to stimulate the secretion of the gonadotropic hormones luteinizing hormone (LH) and follicle-stimulating hormone (FSH). This receptor mediates its action by association with G-proteins that activate a phosphatidylinositol-calcium second messenger system. The polypeptide is Gonadotropin-releasing hormone receptor (GNRHR) (Canis lupus familiaris (Dog)).